Reading from the N-terminus, the 355-residue chain is Protein HGH1 homolog (355 aa).

Positions 324-355 are disordered; sequence DEEGDPTPEEIEQMNKKQKLEDEDAQFETDEI. Acidic residues-rich tracts occupy residues 325–335 and 344–355; these read EEGDPTPEEIE and EDEDAQFETDEI.

Belongs to the HGH1 family.

The protein is Protein HGH1 homolog of Dictyostelium discoideum (Social amoeba).